The sequence spans 607 residues: UvrABC system protein C (607 aa).

Residues 15–94 (ENPGVYLMKN…IKRHRPYFNV (80 aa)) enclose the GIY-YIG domain. In terms of domain architecture, UVR spans 204 to 239 (DQVLKLLIRLMNEASARLDYETAALRRDQIASIKEV).

Belongs to the UvrC family. In terms of assembly, interacts with UvrB in an incision complex.

The protein localises to the cytoplasm. The UvrABC repair system catalyzes the recognition and processing of DNA lesions. UvrC both incises the 5' and 3' sides of the lesion. The N-terminal half is responsible for the 3' incision and the C-terminal half is responsible for the 5' incision. The polypeptide is UvrABC system protein C (Dehalococcoides mccartyi (strain CBDB1)).